We begin with the raw amino-acid sequence, 288 residues long: Proline iminopeptidase (288 aa).

The 248-residue stretch at 27–274 (PVIVLHGGPG…SAHMPYIEEP (248 aa)) folds into the AB hydrolase-1 domain. The active-site Nucleophile is the Ser-101. Residue Asp-240 is part of the active site. His-267 acts as the Proton donor in catalysis.

The protein belongs to the peptidase S33 family. In terms of assembly, monomer.

It localises to the cytoplasm. It catalyses the reaction Release of N-terminal proline from a peptide.. With respect to regulation, completely inhibited by p-chloromercuribenzoate (PCMB) and heavy metal salts. Partially inhibited by proline and proline derivatives with proline as the amino terminus. Enzyme inactivated by PCMB is reactivated by incubation with 2-mercaptoethanol. In terms of biological role, releases the N-terminal proline from various substrates including at least dipeptides Pro-Pro, Pro-Gln, Pro-Trp and Pro-Tyr. Also acts on amides (Pro-beta NA) and oligopeptides including Pro-Leu-GlyNH2, Pro-Leu-Gly, Pro-Phe-Gly-Lys, Pro-Pro-Ala-OBut and Pro-Pro-Gly-(Pro-Pro-Gly)(4). Higher activity toward small peptides (up to three residues), but very low activity for longer peptides. Has no activity against p-nitrophenyl acetate, poly_L-proline, Met-Pro or amino acyl amides other than Pro-betaNA (Pyr-betaNA, Phe-betaNA, Cys-betaNA, Met-betaNA, Leu-betaNA, Ala-betaNA and Z-Gly-Pro-betaNA). This Heyndrickxia coagulans (Weizmannia coagulans) protein is Proline iminopeptidase (pip).